The following is a 355-amino-acid chain: N6-mAMP deaminase (355 aa).

Zn(2+)-binding residues include His13 and His15. N(6)-methyl-AMP contacts are provided by residues His15, Asn17, His65, 97 to 100 (TTPK), Asp160, and Gly190. His217 serves as a coordination point for Zn(2+). 3 residues coordinate N(6)-methyl-AMP: Glu220, Asp295, and Asp296. Catalysis depends on Glu220, which acts as the Proton donor. Asp295 lines the Zn(2+) pocket.

This sequence belongs to the metallo-dependent hydrolases superfamily. Adenosine and AMP deaminases family. As to quaternary structure, monomer. Requires Zn(2+) as cofactor.

It is found in the cytoplasm. The protein localises to the cytosol. It carries out the reaction N(6)-methyl-AMP + H2O + H(+) = IMP + methylamine. Its function is as follows. Catalyzes the hydrolysis of the free cytosolic methylated adenosine nucleotide N(6)-methyl-AMP (N6-mAMP) to produce inositol monophosphate (IMP) and methylamine. Is required for the catabolism of cytosolic N6-mAMP, which is derived from the degradation of mRNA containing N6-methylated adenine (m6A). Does not possess deaminase activity toward adenosine, AMP, N6-methyladenosine, or N6-mATP in vitro. The protein is N6-mAMP deaminase of Arabidopsis thaliana (Mouse-ear cress).